Consider the following 60-residue polypeptide: Large ribosomal subunit protein bL32 (60 aa).

The span at M1–R16 shows a compositional bias: basic residues. Residues M1 to S28 are disordered.

This sequence belongs to the bacterial ribosomal protein bL32 family.

The sequence is that of Large ribosomal subunit protein bL32 from Solibacter usitatus (strain Ellin6076).